A 348-amino-acid chain; its full sequence is Dehydrogenase orsE (348 aa).

43 to 46 provides a ligand contact to NADP(+); it reads LDTH. 130 to 137 is a binding site for substrate; the sequence is FAVEAAVC. NADP(+) contacts are provided by residues 180-183, 203-206, and 272-273; these read SSSV, GAHN, and VH. 292–296 contacts substrate; sequence NDIAT. Residue 339-340 participates in NADP(+) binding; it reads VS.

Belongs to the zinc-containing alcohol dehydrogenase family. As to quaternary structure, monomer.

In terms of biological role, dehydrogenase; part of the gene cluster that mediates the biosynthesis of orsellinic acid, as well as of the cathepsin K inhibitors F9775 A and F9775 B. The non-reducing polyketide synthase orsA produces orsellinic acid by condensing acetyl-CoA with 3 malonyl-CoA units. Further modifications by the decarboxylase orsB and the tyrosinase-like protein orsC lead to the production of F9775 A and F9775 B. The functions of orsD and orsE remain unclear since only orsB and orsC are required to convert orsellinic acid into F9775 A and F9775 B. The chain is Dehydrogenase orsE from Emericella nidulans (strain FGSC A4 / ATCC 38163 / CBS 112.46 / NRRL 194 / M139) (Aspergillus nidulans).